The primary structure comprises 635 residues: Threonine--tRNA ligase (635 aa).

In terms of domain architecture, TGS spans 1–61 (MIKITLKDGK…HKDSSLEILT (61 aa)). The catalytic stretch occupies residues 242–532 (DHRKLGKELD…LIEQYAGAFP (291 aa)). C333, H384, and H509 together coordinate Zn(2+).

This sequence belongs to the class-II aminoacyl-tRNA synthetase family. Homodimer. Zn(2+) serves as cofactor.

It localises to the cytoplasm. The catalysed reaction is tRNA(Thr) + L-threonine + ATP = L-threonyl-tRNA(Thr) + AMP + diphosphate + H(+). In terms of biological role, catalyzes the attachment of threonine to tRNA(Thr) in a two-step reaction: L-threonine is first activated by ATP to form Thr-AMP and then transferred to the acceptor end of tRNA(Thr). Also edits incorrectly charged L-seryl-tRNA(Thr). The sequence is that of Threonine--tRNA ligase from Clostridium botulinum (strain Langeland / NCTC 10281 / Type F).